A 480-amino-acid polypeptide reads, in one-letter code: Glutamyl-tRNA(Gln) amidotransferase subunit A (480 aa).

Catalysis depends on charge relay system residues lysine 74 and serine 149. Serine 173 serves as the catalytic Acyl-ester intermediate.

It belongs to the amidase family. GatA subfamily. In terms of assembly, heterotrimer of A, B and C subunits.

The enzyme catalyses L-glutamyl-tRNA(Gln) + L-glutamine + ATP + H2O = L-glutaminyl-tRNA(Gln) + L-glutamate + ADP + phosphate + H(+). Allows the formation of correctly charged Gln-tRNA(Gln) through the transamidation of misacylated Glu-tRNA(Gln) in organisms which lack glutaminyl-tRNA synthetase. The reaction takes place in the presence of glutamine and ATP through an activated gamma-phospho-Glu-tRNA(Gln). In Vesicomyosocius okutanii subsp. Calyptogena okutanii (strain HA), this protein is Glutamyl-tRNA(Gln) amidotransferase subunit A.